An 85-amino-acid polypeptide reads, in one-letter code: MQTVTMYTGPFCPYCTMAKRLLHAAGVGHIDEIRVDASPEAFAEMQQLSGQRSVPQIFIGETHVGGFTDLYRLQQEGGLDGLLNP.

Residues 1–85 (MQTVTMYTGP…EGGLDGLLNP (85 aa)) enclose the Glutaredoxin domain. An intrachain disulfide couples C12 to C15.

Belongs to the glutaredoxin family. Monomer.

Its subcellular location is the cytoplasm. Functionally, has a glutathione-disulfide oxidoreductase activity in the presence of NADPH and glutathione reductase. Reduces low molecular weight disulfides and proteins. This chain is Glutaredoxin (grx), found in Neisseria meningitidis serogroup A / serotype 4A (strain DSM 15465 / Z2491).